The following is a 692-amino-acid chain: Vacuolar amino acid transporter 3 (692 aa).

Over residues 1–14 the composition is skewed to polar residues; that stretch reads MNGKEVSSGSGRTQ. The segment at 1-71 is disordered; sequence MNGKEVSSGS…TGGLLKKPPL (71 aa). Residues 15–24 show a composition bias toward low complexity; that stretch reads SNNNKKNNNG. Polar residues predominate over residues 28–38; the sequence is GISHASGSPLT. Residues Ser59, Ser119, and Ser121 each carry the phosphoserine modification. 2 disordered regions span residues 135–170 and 258–294; these read KWTNDHPSSPSQYQYPSQPALSTSIPSQAPSFSNRK and DLSEEEEEEEETEEEPEEEALETESTQLVSREHGRHP. Low complexity predominate over residues 141-153; sequence PSSPSQYQYPSQP. Residues 154-167 show a composition bias toward polar residues; it reads ALSTSIPSQAPSFS. Residue Ser165 is modified to Phosphoserine. The segment covering 258–279 has biased composition (acidic residues); that stretch reads DLSEEEEEEEETEEEPEEEALE. The next 11 helical transmembrane spans lie at 302–322, 329–349, 374–394, 412–432, 443–463, 483–503, 519–539, 561–581, 607–627, 630–650, and 665–685; these read AVLLLLKSFVGTGVLFLPKAF, FSALCLLSCALISYGCFVSLI, FAILSSIALSQIGFSAAYTVF, GSISLATYIFAQVLIFVPLSL, ALIADLFILLGLVYVYVYSIY, WSLFIGTAIFTFEGIGLLIPI, AVMCIVAVIFISCGLLCYAAF, VQLLYALAILLSTPLQLFPAI, YFRCAIVVLTSILAWVGANDL, FVSLVGSFACIPLIYIYPPLL, and LLLDLIVIVFGVAVMAYTSWQ.

This sequence belongs to the amino acid/polyamine transporter 2 family.

The protein resides in the vacuole membrane. In terms of biological role, involved in amino acid efflux from the vacuole to the cytoplasm. Capable of transporting large neutral amino acids including tyrosine, glutamine, asparagine, isoleucine and leucine. The sequence is that of Vacuolar amino acid transporter 3 (AVT3) from Saccharomyces cerevisiae (strain ATCC 204508 / S288c) (Baker's yeast).